We begin with the raw amino-acid sequence, 760 residues long: H(+)/Cl(-) exchange transporter 4 (760 aa).

The Cytoplasmic portion of the chain corresponds to 1–67; that stretch reads MVNAGAMSGS…WEFIKSLLDA (67 aa). The tract at residues 14–63 is required for localization in the endoplasmic reticulum; sequence MDFLDEPFPDVGTYEDFHTIDWLREKSRDTDRHRKITSKSKESIWEFIKS. A run of 2 helical transmembrane segments spans residues 68–105 and 151–174; these read WSGW…VCLS and LNYL…VRVF. The Selectivity filter part_1 motif lies at 180 to 184; that stretch reads GSGIP. Chloride is bound at residue Ser181. The helical intramembrane region spans 183–190; it reads IPEIKTIL. 2 helical membrane passes run 200-218 and 224-243; these read GKWT…VSSG and EGPL…SLFS. A Selectivity filter part_2 motif is present at residues 222–226; the sequence is GKEGP. 2 intramembrane regions (helical) span residues 255–267 and 271–279; these read VLSA…VSVA and PIGGVLFSL. A run of 5 helical transmembrane segments spans residues 291 to 309, 333 to 358, 365 to 385, 442 to 462, and 467 to 486; these read LWRS…RSIN, FPFI…AWCR, LGKY…IIAY, MWQL…TFGM, and GLFI…VGIG. Positions 467–471 match the Selectivity filter part_3 motif; sequence GLFIP. Phe469 provides a ligand contact to chloride. 2 intramembrane regions (helical) span residues 514 to 528 and 532 to 543; these read GLYA…LGGV and TVSLVVIMFELT. The segment at residues 544–547 is an intramembrane region (note=Loop between two helices); sequence GGLE. Residues 548–566 traverse the membrane as a helical segment; it reads YIVPLMAAAVTSKWVADAF. At 567–760 the chain is on the cytoplasmic side; sequence GKEGIYEAHI…NQDPESIMFN (194 aa). A chloride-binding site is contributed by Tyr572. One can recognise a CBS 1 domain in the interval 600–666; the sequence is MRPRRGEPPL…AIKNARQRQE (67 aa). ATP-binding positions include Ser610 and 631-633; that span reads YNG. Residues 667 to 696 are required for localization in the endoplasmic reticulum; sequence GIVSNSIMYFTEEPPELPANSPHPLKLRRI. The region spanning 697-755 is the CBS 2 domain; the sequence is LNLSPFTVTDHTPMETVVDIFRKLGLRQCLVTRSGRLLGIITKKDVLRHMAQMANQDPE. ATP is bound at residue 738-741; it reads TKKD.

It belongs to the chloride channel (TC 2.A.49) family. ClC-4/CLCN4 subfamily. As to quaternary structure, monomer. Forms heterodimers with CLCN3. Abundant in skeletal muscle and also detectable in brain and heart.

It localises to the early endosome membrane. It is found in the late endosome membrane. The protein localises to the endoplasmic reticulum membrane. Its subcellular location is the lysosome membrane. The protein resides in the recycling endosome membrane. Its function is as follows. Strongly outwardly rectifying, electrogenic H(+)/Cl(-)exchanger which mediates the exchange of chloride ions against protons. The CLC channel family contains both chloride channels and proton-coupled anion transporters that exchange chloride or another anion for protons. The presence of conserved gating glutamate residues is typical for family members that function as antiporters. This is H(+)/Cl(-) exchange transporter 4 (CLCN4) from Homo sapiens (Human).